Reading from the N-terminus, the 56-residue chain is Small ribosomal subunit protein uS14 (56 aa).

4 residues coordinate Zn(2+): cysteine 21, cysteine 24, cysteine 39, and cysteine 42.

This sequence belongs to the universal ribosomal protein uS14 family. In terms of assembly, component of the small ribosomal subunit (SSU). Mature N.crassa ribosomes consist of a small (40S) and a large (60S) subunit. The 40S small subunit contains 1 molecule of ribosomal RNA (18S rRNA) and at least 32 different proteins. The large 60S subunit contains 3 rRNA molecules (26S, 5.8S and 5S rRNA) and at least 42 different proteins. Zn(2+) serves as cofactor.

Its subcellular location is the cytoplasm. Component of the ribosome, a large ribonucleoprotein complex responsible for the synthesis of proteins in the cell. The small ribosomal subunit (SSU) binds messenger RNAs (mRNAs) and translates the encoded message by selecting cognate aminoacyl-transfer RNA (tRNA) molecules. The large subunit (LSU) contains the ribosomal catalytic site termed the peptidyl transferase center (PTC), which catalyzes the formation of peptide bonds, thereby polymerizing the amino acids delivered by tRNAs into a polypeptide chain. The nascent polypeptides leave the ribosome through a tunnel in the LSU and interact with protein factors that function in enzymatic processing, targeting, and the membrane insertion of nascent chains at the exit of the ribosomal tunnel. The sequence is that of Small ribosomal subunit protein uS14 (rps-29) from Neurospora crassa (strain ATCC 24698 / 74-OR23-1A / CBS 708.71 / DSM 1257 / FGSC 987).